The primary structure comprises 117 residues: Large ribosomal subunit protein bL17 (117 aa).

It belongs to the bacterial ribosomal protein bL17 family. In terms of assembly, part of the 50S ribosomal subunit. Contacts protein L32.

The protein is Large ribosomal subunit protein bL17 of Neorickettsia sennetsu (strain ATCC VR-367 / Miyayama) (Ehrlichia sennetsu).